The chain runs to 1373 residues: Poly(A) RNA polymerase gld-2 homolog B (1373 aa).

The segment covering 75–91 has biased composition (low complexity); the sequence is NSCHSSNSSSNTSNNNN. Disordered regions lie at residues 75 to 155, 175 to 340, 425 to 543, 734 to 770, 802 to 866, and 880 to 928; these read NSCH…QEKQ, SDCK…FWKT, PDST…QQQK, PQQQ…FADG, CGSG…ALGS, and HPLH…PTPV. The span at 96 to 112 shows a compositional bias: polar residues; that stretch reads GQQQQPLHYCNSNNSHS. Composition is skewed to low complexity over residues 130 to 152, 180 to 219, 228 to 251, and 274 to 284; these read QQQQ…QMQQ, SDSN…SCSN, NENS…NTSS, and ESGSSEGAAES. 2 stretches are compositionally biased toward polar residues: residues 295 to 340 and 430 to 442; these read CNSN…FWKT and KSSS…NMIR. Residues 443–485 are compositionally biased toward low complexity; sequence SSSNGNSNFSRHQYGHQSTGSGYQQQQQRYRNAQNVYQQYQHQ. Over residues 486–502 the composition is skewed to basic residues; sequence QQHHAQQHTHPHFRRKH. Composition is skewed to low complexity over residues 735 to 753 and 819 to 844; these read QQQQ…GTSS and AGAL…SGTS. The span at 855-866 shows a compositional bias: polar residues; it reads PSISPTPSALGS. Low complexity predominate over residues 880–890; the sequence is HPLHQQHPPSH. The tract at residues 945-1373 is sufficent for interaction with Dcr-2; it reads RYLAQARNIE…FAETTAAHVA (429 aa). Positions 1029 and 1031 each coordinate Mg(2+). The PAP-associated domain occupies 1211 to 1272; sequence TLGEHLLGFF…NIEEPFDLSN (62 aa). Low complexity predominate over residues 1320–1341; that stretch reads LQQHQQQFEQQLHHPISGQQRS. The interval 1320 to 1359 is disordered; it reads LQQHQQQFEQQLHHPISGQQRSAGGGGDGANPVPSTLNPD.

Belongs to the DNA polymerase type-B-like family. GLD2 subfamily. Interacts with orb, an RNA-binding protein, generating an ovarian cytoplasmic polyadenylation complex. Interacts (via C-terminus) with Dcr-2. The cofactor is Mg(2+). It depends on Mn(2+) as a cofactor. In terms of tissue distribution, expressed in ovaries. Not expressed in adult males.

Its subcellular location is the cytoplasm. The catalysed reaction is RNA(n) + ATP = RNA(n)-3'-adenine ribonucleotide + diphosphate. Cytoplasmic poly(A) RNA polymerase that adds successive AMP monomers to the 3'-end of specific maternal RNAs (bcd, Tl, and tor), forming a poly(A) tail, during late oogenesis and early embryogenesis. In contrast to the canonical nuclear poly(A) RNA polymerase, it only adds poly(A) to selected cytoplasmic mRNAs. Required for localization of mRNAs to both poles of the egg, to recruit or maintain known centrosomal proteins with two types of microtubule organizing centers (MTOCs): the central MTOC that forms between the meiosis II tandem spindles and the centrosomes of the mitotic spindle. Required at the final stage of oogenesis for meiosis I metaphase arrest and for progression beyond this stage. Functions with the RNA-binding protein Dcr-2 to promote cytoplasmic polyadenylation and translational activation of certain mRNAs such as Tl and r2d2. As a consequence, is involved in regulating Toll immune signaling and promoting resistance to fungal infection. The polypeptide is Poly(A) RNA polymerase gld-2 homolog B (wisp) (Drosophila melanogaster (Fruit fly)).